Reading from the N-terminus, the 356-residue chain is C-X-C chemokine receptor type 2 (356 aa).

The Extracellular segment spans residues 1–46 (MEYINWDNYSLEDLFGDIDNYTYNTEMPIIPADSAPCRPESLDINK). Residues asparagine 8 and asparagine 20 are each glycosylated (N-linked (GlcNAc...) asparagine). Residues 47–73 (YAVVVIYVLVFVLNLLGNSLVIMVVLY) form a helical membrane-spanning segment. At 74 to 82 (SRVSHSVTD) the chain is on the cytoplasmic side. The chain crosses the membrane as a helical span at residues 83 to 103 (VYLLNLAIADLLFALTLPIWA). The Extracellular segment spans residues 104 to 118 (VSKVKGWIFGTPLCK). The cysteines at positions 117 and 194 are disulfide-linked. A helical transmembrane segment spans residues 119 to 140 (IVSLLKEVNFYSGILLLASISM). The Cytoplasmic segment spans residues 141-161 (DRYLAIVHATRRLTQKKHWVK). The helical transmembrane segment at 162 to 181 (FICLGIWALSLILSLPIFVF) threads the bilayer. Over 182-206 (RRAINPPYSSPVCYEDMGTNTTKLR) the chain is Extracellular. The chain crosses the membrane as a helical span at residues 207 to 229 (IVMRALPQTFGFIVPLMIMLFCY). Over 230–249 (GLTLRTLFEAHMGQKHRAMR) the chain is Cytoplasmic. The chain crosses the membrane as a helical span at residues 250 to 269 (VIFAVVLVFLLCWLPYNLVA). Over 270–290 (DTLMRLQAIEETCQRRNDIGR) the chain is Extracellular. Residues 291–311 (ALDATEILGFFHSCLNPLIYA) traverse the membrane as a helical segment. The Cytoplasmic segment spans residues 312–356 (FIGQKFRHGLLKIMAFHGLISKEYLPKDSRPSFVGSSSANTSTTF).

The protein belongs to the G-protein coupled receptor 1 family. As to quaternary structure, interacts with IL8. Interacts with GNAI2. Phosphorylated upon ligand binding; which is required for desensitization.

The protein resides in the cell membrane. In terms of biological role, receptor for interleukin-8 which is a powerful neutrophil chemotactic factor. Binding of IL-8 to the receptor causes activation of neutrophils. This response is mediated via a G-protein that activates a phosphatidylinositol-calcium second messenger system. Binds to IL-8 with high affinity. Also binds with high affinity to CXCL3, GRO/MGSA and NAP-2. The sequence is that of C-X-C chemokine receptor type 2 (CXCR2) from Canis lupus familiaris (Dog).